The sequence spans 134 residues: Two-component response regulator ORR5 (134 aa).

Residues 16–133 form the Response regulatory domain; sequence HVLAVDDSSV…DVSRLCSRVL (118 aa). At Asp-66 the chain carries 4-aspartylphosphate.

It belongs to the ARR family. Type-A subfamily. In terms of processing, two-component system major event consists of a His-to-Asp phosphorelay between a sensor histidine kinase (HK) and a response regulator (RR). In plants, the His-to-Asp phosphorelay involves an additional intermediate named Histidine-containing phosphotransfer protein (HPt). This multistep phosphorelay consists of a His-Asp-His-Asp sequential transfer of a phosphate group between first a His and an Asp of the HK protein, followed by the transfer to a conserved His of the HPt protein and finally the transfer to an Asp in the receiver domain of the RR protein. As to expression, expressed in mature leaves and shoots, and at low levels in roots and flowers.

Functionally, functions as a response regulator involved in His-to-Asp phosphorelay signal transduction system. Phosphorylation of the Asp residue in the receiver domain activates the ability of the protein to promote the transcription of target genes. Type-A response regulators seem to act as negative regulators of the cytokinin signaling. The polypeptide is Two-component response regulator ORR5 (Oryza sativa subsp. indica (Rice)).